The primary structure comprises 1091 residues: Error-prone DNA polymerase (1091 aa).

Residues 1 to 51 (MGWSNGPPSWAEMERVLNGKPRHAGVPAFDADGDVPRSRKRGAYQPPGRER) form a disordered region.

This sequence belongs to the DNA polymerase type-C family. DnaE2 subfamily.

The protein resides in the cytoplasm. The enzyme catalyses DNA(n) + a 2'-deoxyribonucleoside 5'-triphosphate = DNA(n+1) + diphosphate. In terms of biological role, DNA polymerase involved in damage-induced mutagenesis and translesion synthesis (TLS). It is not the major replicative DNA polymerase. This chain is Error-prone DNA polymerase, found in Mycobacterium bovis (strain ATCC BAA-935 / AF2122/97).